A 1238-amino-acid chain; its full sequence is DNA-directed RNA polymerase subunit beta (1238 aa).

Belongs to the RNA polymerase beta chain family. As to quaternary structure, the RNAP catalytic core consists of 2 alpha, 1 beta, 1 beta' and 1 omega subunit. When a sigma factor is associated with the core the holoenzyme is formed, which can initiate transcription.

The enzyme catalyses RNA(n) + a ribonucleoside 5'-triphosphate = RNA(n+1) + diphosphate. Functionally, DNA-dependent RNA polymerase catalyzes the transcription of DNA into RNA using the four ribonucleoside triphosphates as substrates. This Clostridioides difficile (strain 630) (Peptoclostridium difficile) protein is DNA-directed RNA polymerase subunit beta.